A 351-amino-acid polypeptide reads, in one-letter code: Probable E3 ubiquitin-protein ligase sinah (351 aa).

Positions 1–38 (MSVRNSRPQLSWPERVSPQRTIDTPTASGEMLTRRQSA) are disordered. The span at 18–27 (PQRTIDTPTA) shows a compositional bias: polar residues. The RING-type zinc finger occupies 106-141 (CPVCFGYIMPPIMQCPRGHLICSTCRSKLTICPVCR). The tract at residues 155–346 (VASKLIFPCK…LALNVVIRKV (192 aa)) is SBD. The SIAH-type zinc-finger motif lies at 158 to 218 (KLIFPCKHSH…VYQHLMSSHE (61 aa)). Positions 163, 170, 182, 186, 193, 200, 212, and 217 each coordinate Zn(2+).

It belongs to the SINA (Seven in absentia) family. As to quaternary structure, interacts with ebi and phyl.

It catalyses the reaction S-ubiquitinyl-[E2 ubiquitin-conjugating enzyme]-L-cysteine + [acceptor protein]-L-lysine = [E2 ubiquitin-conjugating enzyme]-L-cysteine + N(6)-ubiquitinyl-[acceptor protein]-L-lysine.. Its pathway is protein modification; protein ubiquitination. Its function is as follows. E3 ubiquitin-protein ligase that mediates ubiquitination and subsequent proteasomal degradation of target proteins. The adapter phyl is required to direct the degradation of the two isoforms of the transcriptional repressor Tramtrack (Ttk). E3 ubiquitin ligases accept ubiquitin from an E2 ubiquitin-conjugating enzyme in the form of a thioester and then directly transfers the ubiquitin to targeted substrates. It probably triggers the ubiquitin-mediated degradation of different substrates. A phyl-independent mechanism of degradation exists for isoform beta of ttk that involves motifs in the C-terminus of ttk. The chain is Probable E3 ubiquitin-protein ligase sinah (sinah) from Drosophila melanogaster (Fruit fly).